The following is a 601-amino-acid chain: Elongation factor 4 (601 aa).

The tr-type G domain occupies 6–188; that stretch reads NRIRNFCIIA…QVVTKIAPPK (183 aa). Residues 18–23 and 135–138 contribute to the GTP site; these read DHGKST and NKID.

The protein belongs to the TRAFAC class translation factor GTPase superfamily. Classic translation factor GTPase family. LepA subfamily.

The protein resides in the cell membrane. It carries out the reaction GTP + H2O = GDP + phosphate + H(+). Functionally, required for accurate and efficient protein synthesis under certain stress conditions. May act as a fidelity factor of the translation reaction, by catalyzing a one-codon backward translocation of tRNAs on improperly translocated ribosomes. Back-translocation proceeds from a post-translocation (POST) complex to a pre-translocation (PRE) complex, thus giving elongation factor G a second chance to translocate the tRNAs correctly. Binds to ribosomes in a GTP-dependent manner. This chain is Elongation factor 4, found in Desulforamulus reducens (strain ATCC BAA-1160 / DSM 100696 / MI-1) (Desulfotomaculum reducens).